The chain runs to 296 residues: Urease accessory protein UreD (296 aa).

This sequence belongs to the UreD family. As to quaternary structure, ureD, UreF and UreG form a complex that acts as a GTP-hydrolysis-dependent molecular chaperone, activating the urease apoprotein by helping to assemble the nickel containing metallocenter of UreC. The UreE protein probably delivers the nickel.

Its subcellular location is the cytoplasm. Its function is as follows. Required for maturation of urease via the functional incorporation of the urease nickel metallocenter. The chain is Urease accessory protein UreD from Synechococcus sp. (strain CC9311).